The following is a 754-amino-acid chain: Catalase-peroxidase (754 aa).

The interval Met1 to Asp29 is disordered. The segment covering Arg7 to Glu23 has biased composition (basic residues). Residue Trp106 is the Tryptophan radical intermediate of the active site. A cross-link (tryptophyl-tyrosyl-methioninium (Trp-Tyr) (with M-275)) is located at residues Trp122–Tyr249. Residue His123 is the Proton acceptor of the active site. The segment at residues Tyr249–Met275 is a cross-link (tryptophyl-tyrosyl-methioninium (Tyr-Met) (with W-122)). Residue His290 participates in heme b binding.

This sequence belongs to the peroxidase family. Peroxidase/catalase subfamily. Homodimer. It depends on heme b as a cofactor. Formation of the three residue Trp-Tyr-Met cross-link is important for the catalase, but not the peroxidase activity of the enzyme.

It catalyses the reaction H2O2 + AH2 = A + 2 H2O. The enzyme catalyses 2 H2O2 = O2 + 2 H2O. Functionally, bifunctional enzyme with both catalase and broad-spectrum peroxidase activity. Also displays NADH oxidase, isoniazid hydrazine lyase and isonicotinoyl-NAD synthase activities. This is Catalase-peroxidase from Synechocystis sp. (strain ATCC 27184 / PCC 6803 / Kazusa).